A 208-amino-acid polypeptide reads, in one-letter code: Protein-L-isoaspartate O-methyltransferase (208 aa).

The active site involves Ser-59.

The protein belongs to the methyltransferase superfamily. L-isoaspartyl/D-aspartyl protein methyltransferase family.

Its subcellular location is the cytoplasm. It carries out the reaction [protein]-L-isoaspartate + S-adenosyl-L-methionine = [protein]-L-isoaspartate alpha-methyl ester + S-adenosyl-L-homocysteine. Catalyzes the methyl esterification of L-isoaspartyl residues in peptides and proteins that result from spontaneous decomposition of normal L-aspartyl and L-asparaginyl residues. It plays a role in the repair and/or degradation of damaged proteins. The chain is Protein-L-isoaspartate O-methyltransferase from Salmonella newport (strain SL254).